A 268-amino-acid polypeptide reads, in one-letter code: Hydroxyethylthiazole kinase (268 aa).

Met45 is a binding site for substrate. Arg121 and Thr167 together coordinate ATP. Gly194 is a binding site for substrate.

It belongs to the Thz kinase family. Mg(2+) serves as cofactor.

The enzyme catalyses 5-(2-hydroxyethyl)-4-methylthiazole + ATP = 4-methyl-5-(2-phosphooxyethyl)-thiazole + ADP + H(+). Its pathway is cofactor biosynthesis; thiamine diphosphate biosynthesis; 4-methyl-5-(2-phosphoethyl)-thiazole from 5-(2-hydroxyethyl)-4-methylthiazole: step 1/1. In terms of biological role, catalyzes the phosphorylation of the hydroxyl group of 4-methyl-5-beta-hydroxyethylthiazole (THZ). This chain is Hydroxyethylthiazole kinase, found in Bacillus thuringiensis subsp. konkukian (strain 97-27).